The following is a 465-amino-acid chain: Midnolin (465 aa).

The Ubiquitin-like domain maps to 32–106 (MSLAIHSTTG…LTLVPTVEAG (75 aa)). Disordered stretches follow at residues 185–262 (SVAT…SRKP) and 400–445 (RLRR…GLDF). Low complexity-rich tracts occupy residues 195 to 219 (RPVSSAARVPPVSSSPSSPVSPSPV) and 240 to 257 (SPPASSSSTSTPGSSPTP). Residues 397 to 424 (QQKRLRRKARRDARGPYHWTPSRKAGRS) are required for nucleolar localization.

In terms of assembly, interacts with GCK; the interaction occurs preferentially at low glucose levels. Interacts with the proteasome. In terms of tissue distribution, expressed at high levels in brain and liver with significantly lower levels in muscle.

It is found in the nucleus. The protein resides in the cytoplasm. It localises to the cytosol. Its subcellular location is the nucleolus. Facilitates the ubiquitin-independent proteasomal degradation of stimulus-induced transcription factors such as FOSB, EGR1, NR4A1, and IRF4 to the proteasome for degradation. Promotes also the degradation of other substrates such as CBX4. Plays a role in inhibiting the activity of glucokinase GCK and both glucose-induced and basal insulin secretion. The chain is Midnolin (Midn) from Mus musculus (Mouse).